An 847-amino-acid chain; its full sequence is Alanine--tRNA ligase (847 aa).

The Zn(2+) site is built by H554, H558, C656, and H660.

This sequence belongs to the class-II aminoacyl-tRNA synthetase family. Zn(2+) is required as a cofactor.

The protein localises to the cytoplasm. The catalysed reaction is tRNA(Ala) + L-alanine + ATP = L-alanyl-tRNA(Ala) + AMP + diphosphate. Functionally, catalyzes the attachment of alanine to tRNA(Ala) in a two-step reaction: alanine is first activated by ATP to form Ala-AMP and then transferred to the acceptor end of tRNA(Ala). Also edits incorrectly charged Ser-tRNA(Ala) and Gly-tRNA(Ala) via its editing domain. The protein is Alanine--tRNA ligase of Helicobacter pylori (strain HPAG1).